We begin with the raw amino-acid sequence, 440 residues long: MKMAGWKKKLCRGHHLWALGCYMLLAVVSLRLSLRFKCDVDSLDLESRDFQSQHCRDMLYNSLKLPAKRSINCSGITRGDQEAVVQALLDNLEVKKKRSPLTGTYYLNITRDCERFKAQRKFIQFPLSKEELDFPIAYSMVVHEKIENFERLLRAVYAPQNIYCVHVDVKSPETFKEAVKAIISCFPNVFMASKLVPVVYASWSRVQADLNCMEDLLQSSVPWKYLLNTCGTDFPIKTNAEMVLALKMLKGKNSMESEVPSESKKNRWKYRYEVTDTLYPTSKMKDPPPDNLPMFTGNAYFVASRAFVQHVLDNPKSQRLVEWVKDTYSPDEHLWATLQRAPWMPGSVPSHPKYHISDMTAIARLVKWQYHEGDVSMGAPYAPCSGIHRRAICIYGAGDLYWILQNHHLLANKFDPRVDDNVLQCLEEYLRHKAIYGTEL.

The Cytoplasmic portion of the chain corresponds to 1 to 12; that stretch reads MKMAGWKKKLCR. The chain crosses the membrane as a helical; Signal-anchor for type II membrane protein span at residues 13–30; that stretch reads GHHLWALGCYMLLAVVSL. At 31–440 the chain is on the lumenal side; that stretch reads RLSLRFKCDV…RHKAIYGTEL (410 aa). Asn72 and Asn108 each carry an N-linked (GlcNAc...) asparagine; by host glycan. Cystine bridges form between Cys73–Cys230, Cys164–Cys384, Cys185–Cys212, and Cys393–Cys425.

This sequence belongs to the glycosyltransferase 14 family.

It is found in the host Golgi apparatus membrane. The enzyme catalyses a 3-O-[beta-D-galactosyl-(1-&gt;3)-N-acetyl-alpha-D-galactosaminyl]-L-seryl-[protein] + UDP-N-acetyl-alpha-D-glucosamine = 3-O-{beta-D-galactosyl-(1-&gt;3)-[N-acetyl-beta-D-glucosaminyl-(1-&gt;6)]-N-acetyl-alpha-D-galactosaminyl}-L-seryl-[protein] + UDP + H(+). It catalyses the reaction a 3-O-[beta-D-galactosyl-(1-&gt;3)-N-acetyl-alpha-D-galactosaminyl]-L-threonyl-[protein] + UDP-N-acetyl-alpha-D-glucosamine = a 3-O-{beta-D-galactosyl-(1-&gt;3)-[N-acetyl-beta-D-glucosaminyl-(1-&gt;6)]-N-acetyl-alpha-D-galactosaminyl}-L-threonyl-[protein] + UDP + H(+). The catalysed reaction is a beta-D-Gal-(1-&gt;4)-beta-D-GlcNAc-(1-&gt;3)-beta-D-Gal-(1-&gt;4)-beta-D-GlcNAc derivative + UDP-N-acetyl-alpha-D-glucosamine = a beta-D-Gal-(1-&gt;4)-beta-D-GlcNAc-(1-&gt;3)-[beta-D-GlcNAc-(1-&gt;6)]-beta-D-Gal-(1-&gt;4)-N-acetyl-beta-D-glucosaminyl derivative + UDP + H(+). It carries out the reaction 3-O-[N-acetyl-beta-D-glucosaminyl-(1-&gt;3)-N-acetyl-alpha-D-galactosaminyl]-L-seryl-[protein] + UDP-N-acetyl-alpha-D-glucosamine = 3-O-[N-acetyl-beta-D-glucosaminyl-(1-&gt;3)-[N-acetyl-beta-D-glucosaminyl-(1-&gt;6)]-N-acetyl-alpha-D-galactosaminyl]-L-seryl-[protein] + UDP + H(+). The enzyme catalyses a 3-O-[N-acetyl-beta-D-glucosaminyl-(1-&gt;3)-N-acetyl-alpha-D-galactosaminyl]-L-threonyl-[protein] + UDP-N-acetyl-alpha-D-glucosamine = 3-O-[N-acetyl-beta-D-glucosaminyl-(1-&gt;3)-[N-acetyl-beta-D-glucosaminyl-(1-&gt;6)]-N-acetyl-alpha-D-galactosaminyl]-L-threonyl-[protein] + UDP + H(+). It functions in the pathway protein modification; protein glycosylation. Non-essential glycosyltransferase that can synthesize all known mucin beta 6 N-acetylglucosaminides. Mediates core 2 and core 4 O-glycan branching, 2 important steps in mucin-type biosynthesis. Has also I-branching enzyme activity by converting linear into branched poly-N-acetyllactosaminoglycans. Contributes to the post-translational modifications of structural proteins. In Bos taurus (Bovine), this protein is Beta-1,3-galactosyl-O-glycosyl-glycoprotein beta-1,6-N-acetylglucosaminyltransferase (Bo17).